The sequence spans 112 residues: Large ribosomal subunit protein bL21 (112 aa).

The protein belongs to the bacterial ribosomal protein bL21 family. Part of the 50S ribosomal subunit. Contacts protein L20.

In terms of biological role, this protein binds to 23S rRNA in the presence of protein L20. This chain is Large ribosomal subunit protein bL21, found in Buchnera aphidicola subsp. Baizongia pistaciae (strain Bp).